The primary structure comprises 1021 residues: SWI/SNF-related matrix-associated actin-dependent regulator of chromatin subfamily A containing DEAD/H box 1 (1021 aa).

M1 is modified (N-acetylmethionine). Disordered regions lie at residues M1 to C82 and S124 to S151. The segment covering D7 to E19 has biased composition (basic and acidic residues). The segment covering E22–S39 has biased composition (low complexity). T54 bears the Phosphothreonine mark. A Phosphoserine modification is found at S57. K77 is covalently cross-linked (Glycyl lysine isopeptide (Lys-Gly) (interchain with G-Cter in SUMO2)). Phosphoserine is present on residues S79, S124, S127, S132, S144, S145, and S151. A CUE 1 domain is found at L156 to G198. Residues G201–E246 form a disordered region. 4 positions are modified to phosphoserine: S210, S213, S235, and S238. One can recognise a CUE 2 domain in the interval K247–E290. S298 is subject to Phosphoserine. The segment at V329 to D366 is disordered. Glycyl lysine isopeptide (Lys-Gly) (interchain with G-Cter in SUMO2) cross-links involve residues K330 and K466. The Helicase ATP-binding domain maps to A504–H672. ATP is bound at residue A516–T524. Positions D623–H626 match the DEGH box motif. A Nuclear localization signal motif is present at residues R716 to I733. K719 is covalently cross-linked (Glycyl lysine isopeptide (Lys-Gly) (interchain with G-Cter in SUMO2)). Residues A853–G1005 enclose the Helicase C-terminal domain. An ATP-binding site is contributed by Y892–T899. Residue K991 forms a Glycyl lysine isopeptide (Lys-Gly) (interchain with G-Cter in SUMO2) linkage. The DEAD box motif lies at D1000–D1003.

It belongs to the SNF2/RAD54 helicase family. As to quaternary structure, binds to DNA preferentially in the vicinity of transcriptional start sites. Interacts with MSH2 and TRIM28. Part of a complex composed of TRIM28, HDAC1, HDAC2 and EHMT2. Interacts with PCNA.

The protein localises to the nucleus. It localises to the chromosome. The catalysed reaction is ATP + H2O = ADP + phosphate + H(+). Its function is as follows. DNA helicase that possesses intrinsic ATP-dependent nucleosome-remodeling activity and is both required for DNA repair and heterochromatin organization. Promotes DNA end resection of double-strand breaks (DSBs) following DNA damage: probably acts by weakening histone DNA interactions in nucleosomes flanking DSBs. Required for the restoration of heterochromatin organization after replication. Acts at replication sites to facilitate the maintenance of heterochromatin by directing H3 and H4 histones deacetylation, H3 'Lys-9' trimethylation (H3K9me3) and restoration of silencing. In Mus musculus (Mouse), this protein is SWI/SNF-related matrix-associated actin-dependent regulator of chromatin subfamily A containing DEAD/H box 1 (Smarcad1).